We begin with the raw amino-acid sequence, 69 residues long: Conotoxin Eb6.9 (69 aa).

The signal sequence occupies residues 1–17 (VLIIAVLFLTACQLTTA). A propeptide spanning residues 18–41 (ETYSRGRQKHRARRSTDKNSKWTR) is cleaved from the precursor. Disulfide bonds link C43-C57, C50-C61, and C56-C68.

It belongs to the conotoxin O1 superfamily. In terms of tissue distribution, expressed by the venom duct.

It localises to the secreted. This Conus ebraeus (Hebrew cone) protein is Conotoxin Eb6.9 (E1).